The primary structure comprises 432 residues: Sonic hedgehog protein (432 aa).

A signal peptide spans 1–26; that stretch reads MDEMILLRRVLLAGFICALLVPSGLS. C27 carries the N-palmitoyl cysteine lipid modification. The short motif at 35 to 41 is the Cardin-Weintraub element; that stretch reads TRKRFKK. Ca(2+)-binding residues include E92, E93, D98, T128, E129, D132, and D134. Zn(2+)-binding residues include H143, D150, and H185. Residue G200 is the site of Cholesterol glycine ester attachment.

This sequence belongs to the hedgehog family. In terms of assembly, interacts with HHATL/GUP1 which negatively regulates HHAT-mediated palmitoylation of the SHH N-terminus. Interacts with BOC and CDON. Interacts with HHIP. Interacts with DISP1 via its cholesterol anchor. Interacts with SCUBE2. As to quaternary structure, multimer. In terms of processing, the C-terminal domain displays an autoproteolysis activity and a cholesterol transferase activity. Both activities result in the cleavage of the full-length protein and covalent attachment of a cholesterol moiety to the C-terminal of the newly generated N-terminal fragment (ShhN). Cholesterylation is required for the sonic hedgehog protein N-product targeting to lipid rafts and multimerization. ShhN is the active species in both local and long-range signaling, whereas the C-product (ShhC) is degraded in the reticulum endoplasmic. N-palmitoylation by HHAT of ShhN is required for sonic hedgehog protein N-product multimerization and full activity. It is a prerequisite for the membrane-proximal positioning and the subsequent shedding of this N-terminal peptide. Post-translationally, the lipidated N- and C-terminal peptides of ShhNp can be cleaved (shedding). The N-terminal palmitoylated peptide is cleaved at the Cardin-Weintraub (CW) motif site. The cleavage reduced the interactions with heparan sulfate. The cleavage is enhanced by SCUBE2.

The protein resides in the endoplasmic reticulum membrane. It is found in the golgi apparatus membrane. The protein localises to the cell membrane. The enzyme catalyses glycyl-L-cysteinyl-[protein] + cholesterol + H(+) = [protein]-C-terminal glycyl cholesterol ester + N-terminal L-cysteinyl-[protein]. The C-terminal part of the sonic hedgehog protein precursor displays an autoproteolysis and a cholesterol transferase activity. Both activities result in the cleavage of the full-length protein into two parts (ShhN and ShhC) followed by the covalent attachment of a cholesterol moiety to the C-terminal of the newly generated ShhN. Both activities occur in the endoplasmic reticulum. Once cleaved, ShhC is degraded in the endoplasmic reticulum. Its function is as follows. The dually lipidated sonic hedgehog protein N-product (ShhNp) is a morphogen which is essential for a variety of patterning events during development. Induces ventral cell fate in the neural tube and somites. Involved in the patterning of the anterior-posterior axis of the developing limb bud. Essential for axon guidance. Binds to the patched (PTCH1) receptor, which functions in association with smoothened (SMO), to activate the transcription of target genes. In the absence of SHH, PTCH1 represses the constitutive signaling activity of SMO. In Cynops pyrrhogaster (Japanese fire-bellied newt), this protein is Sonic hedgehog protein.